The primary structure comprises 545 residues: CTP synthase (545 aa).

The amidoligase domain stretch occupies residues 1–266 (MTHFIFVTGG…DDLICERFGY (266 aa)). Serine 13 serves as a coordination point for CTP. Serine 13 contributes to the UTP binding site. ATP-binding positions include 14 to 19 (SLGKGI) and aspartate 71. Mg(2+) contacts are provided by aspartate 71 and glutamate 140. CTP is bound by residues 147-149 (DIE), 187-192 (KTKPTQ), and lysine 223. Residues 187–192 (KTKPTQ) and lysine 223 each bind UTP. 239–241 (KDA) lines the ATP pocket. The Glutamine amidotransferase type-1 domain occupies 292–543 (RVAMVGKYVE…IDAAKKQHLK (252 aa)). L-glutamine is bound at residue glycine 353. Residue cysteine 380 is the Nucleophile; for glutamine hydrolysis of the active site. L-glutamine contacts are provided by residues 381–384 (LGMQ), glutamate 404, and arginine 471. Catalysis depends on residues histidine 516 and glutamate 518.

This sequence belongs to the CTP synthase family. As to quaternary structure, homotetramer.

The enzyme catalyses UTP + L-glutamine + ATP + H2O = CTP + L-glutamate + ADP + phosphate + 2 H(+). The catalysed reaction is L-glutamine + H2O = L-glutamate + NH4(+). It catalyses the reaction UTP + NH4(+) + ATP = CTP + ADP + phosphate + 2 H(+). The protein operates within pyrimidine metabolism; CTP biosynthesis via de novo pathway; CTP from UDP: step 2/2. Its activity is regulated as follows. Allosterically activated by GTP, when glutamine is the substrate; GTP has no effect on the reaction when ammonia is the substrate. The allosteric effector GTP functions by stabilizing the protein conformation that binds the tetrahedral intermediate(s) formed during glutamine hydrolysis. Inhibited by the product CTP, via allosteric rather than competitive inhibition. Its function is as follows. Catalyzes the ATP-dependent amination of UTP to CTP with either L-glutamine or ammonia as the source of nitrogen. Regulates intracellular CTP levels through interactions with the four ribonucleotide triphosphates. In Acinetobacter baylyi (strain ATCC 33305 / BD413 / ADP1), this protein is CTP synthase.